Consider the following 223-residue polypeptide: Adenylate kinase 4, mitochondrial (223 aa).

15–20 (GSGKGT) provides a ligand contact to a ribonucleoside 5'-triphosphate. An NMP region spans residues 35 to 64 (SSGHFLRENIKANTEVGEMAKQYIEKSLLV). Ser-36 and Arg-41 together coordinate AMP. Lys-60 is subject to N6-succinyllysine. Residues 62–64 (LLV), 89–92 (GFPR), and Gln-96 each bind AMP. Positions 125–162 (RRWIHPPSGRVYNLDFNPPHVHGIDDVTGEPLVQQEDD) are LID. A ribonucleoside 5'-triphosphate-binding positions include Arg-126 and 135–136 (VY). Residue Arg-170 participates in AMP binding. Lys-175 bears the N6-acetyllysine mark. N6-acetyllysine; alternate is present on residues Lys-179 and Lys-186. 2 positions are modified to N6-succinyllysine; alternate: Lys-179 and Lys-186. Thr-199 lines the a ribonucleoside 5'-triphosphate pocket.

This sequence belongs to the adenylate kinase family. AK3 subfamily. In terms of assembly, monomer. Interacts with SLC25A5/ANT2.

The protein localises to the mitochondrion matrix. The catalysed reaction is a ribonucleoside 5'-phosphate + ATP = a ribonucleoside 5'-diphosphate + ADP. The enzyme catalyses AMP + ATP = 2 ADP. It carries out the reaction GTP + AMP = GDP + ADP. It catalyses the reaction CMP + ATP = CDP + ADP. The catalysed reaction is GTP + CMP = CDP + GDP. The enzyme catalyses dAMP + ATP = dADP + ADP. It carries out the reaction dCMP + ATP = dCDP + ADP. It catalyses the reaction a 2'-deoxyribonucleoside 5'-diphosphate + ATP = a 2'-deoxyribonucleoside 5'-triphosphate + ADP. The catalysed reaction is a ribonucleoside 5'-diphosphate + ATP = a ribonucleoside 5'-triphosphate + ADP. The enzyme catalyses GDP + ATP = GTP + ADP. It carries out the reaction CDP + GTP = CTP + GDP. It catalyses the reaction CDP + ATP = CTP + ADP. The catalysed reaction is UDP + ATP = UTP + ADP. The enzyme catalyses GTP + UDP = UTP + GDP. It carries out the reaction dADP + GTP = dATP + GDP. It catalyses the reaction dCDP + GTP = dCTP + GDP. The catalysed reaction is dCDP + ATP = dCTP + ADP. The enzyme catalyses dGDP + ATP = dGTP + ADP. It carries out the reaction dTDP + GTP = dTTP + GDP. It catalyses the reaction dTDP + ATP = dTTP + ADP. Broad-specificity mitochondrial nucleoside phosphate kinase involved in cellular nucleotide homeostasis by catalyzing nucleoside-phosphate interconversions. Similar to other adenylate kinases, preferentially catalyzes the phosphorylation of the nucleoside monophosphate AMP with ATP as phosphate donor to produce ADP. Phosphorylates only AMP when using GTP as phosphate donor. In vitro, can also catalyze the phosphorylation of CMP, dAMP and dCMP and use GTP as an alternate phosphate donor. Moreover, exhibits a diphosphate kinase activity, producing ATP, CTP, GTP, UTP, TTP, dATP, dCTP and dGTP from the corresponding diphosphate substrates with either ATP or GTP as phosphate donors. Plays a role in controlling cellular ATP levels by regulating phosphorylation and activation of the energy sensor protein kinase AMPK. Plays a protective role in the cellular response to oxidative stress. The polypeptide is Adenylate kinase 4, mitochondrial (Pongo abelii (Sumatran orangutan)).